Here is a 431-residue protein sequence, read N- to C-terminus: Mitochondrial inner membrane protein OXA1-like (431 aa).

Residues 1 to 22 (MATCLRGITKRVNLLQRRVYPS) constitute a mitochondrion transit peptide. A run of 5 helical transmembrane segments spans residues 119–139 (VVPA…PVAA), 155–175 (WWAS…PILL), 227–247 (FTPL…FFAI), 269–289 (TTTD…LIMV), and 312–332 (IIAF…FCYW). Positions 362–414 (NSSTRQPSPSSPLPFSFAEPKDQSVVAQEKPPMSSESSSSVPDRRISRSSVLN) are disordered. A compositionally biased stretch (low complexity) spans 392–402 (PPMSSESSSSV).

This sequence belongs to the OXA1/ALB3/YidC (TC 2.A.9.2) family.

The protein localises to the mitochondrion inner membrane. In terms of biological role, probably required for the insertion of integral membrane proteins into the mitochondrial inner membrane. May participate in the activity and assembly of cytochrome oxidase. This is Mitochondrial inner membrane protein OXA1-like (OXA1L) from Arabidopsis thaliana (Mouse-ear cress).